Reading from the N-terminus, the 84-residue chain is Cell division topological specificity factor (84 aa).

It belongs to the MinE family.

Prevents the cell division inhibition by proteins MinC and MinD at internal division sites while permitting inhibition at polar sites. This ensures cell division at the proper site by restricting the formation of a division septum at the midpoint of the long axis of the cell. The polypeptide is Cell division topological specificity factor (Granulibacter bethesdensis (strain ATCC BAA-1260 / CGDNIH1)).